Here is a 311-residue protein sequence, read N- to C-terminus: Putative pyruvate, phosphate dikinase regulatory protein (311 aa).

Residue 180–187 (GVSRSSKT) participates in ADP binding.

Belongs to the pyruvate, phosphate/water dikinase regulatory protein family. PDRP subfamily.

It carries out the reaction N(tele)-phospho-L-histidyl/L-threonyl-[pyruvate, phosphate dikinase] + ADP = N(tele)-phospho-L-histidyl/O-phospho-L-threonyl-[pyruvate, phosphate dikinase] + AMP + H(+). The enzyme catalyses N(tele)-phospho-L-histidyl/O-phospho-L-threonyl-[pyruvate, phosphate dikinase] + phosphate + H(+) = N(tele)-phospho-L-histidyl/L-threonyl-[pyruvate, phosphate dikinase] + diphosphate. Its function is as follows. Bifunctional serine/threonine kinase and phosphorylase involved in the regulation of the pyruvate, phosphate dikinase (PPDK) by catalyzing its phosphorylation/dephosphorylation. The sequence is that of Putative pyruvate, phosphate dikinase regulatory protein from Paramagnetospirillum magneticum (strain ATCC 700264 / AMB-1) (Magnetospirillum magneticum).